A 203-amino-acid polypeptide reads, in one-letter code: Akirin-2 (203 aa).

Residues Ser18 and Ser21 each carry the phosphoserine modification. The Nuclear localization signal motif lies at 22–27 (PKRRRC). The residue at position 57 (Ser57) is a Phosphoserine. The SYVS motif motif lies at 200–203 (SYVS).

Belongs to the akirin family. As to quaternary structure, homodimer. Interacts with IPO9; the interaction is direct. Associates (via SYVS motif) with 20S and 26S proteasomes. Interacts with SMARCD1; promoting SWI/SNF complex recruitment. Interacts with NFKBIZ. Interacts with YWHAB. In terms of processing, polyubiquitinated. Polyubiquitination is dependent of UBR5 that extends pre-ubiquitinated AKIRIN2. As to expression, widely expressed with the highest expression in peripheral blood leukocytes.

Its subcellular location is the nucleus. The protein resides in the cytoplasm. The protein localises to the membrane. Molecular adapter that acts as a bridge between a variety of multiprotein complexes, and which is involved in embryonic development, immunity, myogenesis and brain development. Plays a key role in nuclear protein degradation by promoting import of proteasomes into the nucleus: directly binds to fully assembled 20S proteasomes at one end and to nuclear import receptor IPO9 at the other end, bridging them together and mediating the import of pre-assembled proteasome complexes through the nuclear pore. Involved in innate immunity by regulating the production of interleukin-6 (IL6) downstream of Toll-like receptor (TLR): acts by bridging the NF-kappa-B inhibitor NFKBIZ and the SWI/SNF complex, leading to promote induction of IL6. Also involved in adaptive immunity by promoting B-cell activation. Involved in brain development: required for the survival and proliferation of cerebral cortical progenitor cells. Involved in myogenesis: required for skeletal muscle formation and skeletal development, possibly by regulating expression of muscle differentiation factors. Also plays a role in facilitating interdigital tissue regression during limb development. This is Akirin-2 from Homo sapiens (Human).